Consider the following 140-residue polypeptide: uncharacterized protein (140 aa).

This is an uncharacterized protein from Sinorhizobium fredii (strain NBRC 101917 / NGR234).